We begin with the raw amino-acid sequence, 135 residues long: Ribosome-binding factor A (135 aa).

It belongs to the RbfA family. As to quaternary structure, monomer. Binds 30S ribosomal subunits, but not 50S ribosomal subunits or 70S ribosomes.

Its subcellular location is the cytoplasm. Functionally, one of several proteins that assist in the late maturation steps of the functional core of the 30S ribosomal subunit. Associates with free 30S ribosomal subunits (but not with 30S subunits that are part of 70S ribosomes or polysomes). Required for efficient processing of 16S rRNA. May interact with the 5'-terminal helix region of 16S rRNA. The sequence is that of Ribosome-binding factor A from Novosphingobium aromaticivorans (strain ATCC 700278 / DSM 12444 / CCUG 56034 / CIP 105152 / NBRC 16084 / F199).